The primary structure comprises 1098 residues: MDIQQLEVLCKQLYEATDIRIRSEAEKALVTFVSSQDALPKCQLLLQRADSSYAQLLAASTLTKLIQGLSLQERIDIRSYALNYLATVPNLQHFVVQALVSLLAKLTKYGWFDSYKEEMVFQNLLEDVKKFLQGSVEHCTIGVQILSQLVCEMNSVVEMDVQVSFSKMRKIATSFRDQQLLETFLLSCSLLVSARDNSKNISFMDESQQALISHVLRLTKNCLSFDFIGSSTDESADDMNNVQIPTAWRPAFLDSNTLKLFFDLYQILPNGLASYSISCLVQITSVRRSLFNNSERTKFLTHLVEGVKDILTTLHGLSDPDNYHEFCRLLARLKSNYQLGELIAVPCYPEAIQLIAKFTVESLHLWLFAPNSVHYLLTLWQRMVASVPYVKSPDPHLLGTYTPEVIKAYIESRLDAVPVIIRDNLDDPLDDFCMVQQQLEQLSVIERCEYNKTCNLLVQHFDQKAREYENLLQTPNANSIDITIHELQLTWLVYIIGSAIVGRLTVATSDEHDTMDAELVIRVLQLMTLTDARLPQAGCEKLELAILSFLDQVRKMHSSEQAQKANLNKRLSEVFGLTDEQMLLSFINRKIITNLKFWGRSESIITKTLMLLSELSVHFNSVRKLARLEEVQFMLTHHTSEHFPFLGTNSSLSEMRCRTMFYTSLGRLLMFDLGEDEERFYNFLEPLTNQFESLGSVMMDNNIFSNEEAKKVIIGLARDLRGLALPLNARIQYTMLFEWLYYADYLPILLRAMDLWAHDPAVTTPILKLFAELVHCRTQRLAGNVSSPMGILLFREASKLICIYGNRILHQEVPRERLYPMRLKGIAICFLILKNSLGGNYVNCGVFKLYGDDTLDSVLNIIAKLILTIEQRDLIEYPKLSTAYYNLLNCLSQDHVSYLAALEPAAFVYILKSLTKGLAALDSATYISCCTILDSIVSYIFKQLQMKVSTFPNKKLRSLNQENVQFLKVVEMNSELLQSMMSSLLNNVLQEDCRNQWSMSRPLLVLILLYEDYYRSLKDRIICAQPIEKQQTMAQWFDDLMVGIERNVSSKNKEKFTQNMSTFRRDVVNLPKSTAAFSCDRPMCDGGFEPSEPESSPH.

It belongs to the exportin family. As to quaternary structure, binds to nucleoporins and the GTP-bound form of Ran.

The protein resides in the cytoplasm. It is found in the nucleus. In terms of biological role, may function as a nuclear transport receptor. The chain is Ran-binding protein 16 (Ranbp16) from Drosophila melanogaster (Fruit fly).